Reading from the N-terminus, the 347-residue chain is Heme A synthase (347 aa).

8 helical membrane passes run 14 to 34 (VKIW…IGGI), 96 to 116 (FHRL…LYFM), 129 to 149 (FILI…MVKS), 162 to 182 (LAMH…HFLL), 199 to 219 (VFYI…LVAG), 260 to 280 (FIHE…LLVL), 287 to 307 (MYLL…TFIY), and 311 to 331 (IILA…SIYL). H262 lines the heme pocket. Position 317 (H317) interacts with heme.

This sequence belongs to the COX15/CtaA family. Type 2 subfamily. As to quaternary structure, interacts with CtaB. Heme b is required as a cofactor.

Its subcellular location is the cell membrane. The catalysed reaction is Fe(II)-heme o + 2 A + H2O = Fe(II)-heme a + 2 AH2. The protein operates within porphyrin-containing compound metabolism; heme A biosynthesis; heme A from heme O: step 1/1. Its function is as follows. Catalyzes the conversion of heme O to heme A by two successive hydroxylations of the methyl group at C8. The first hydroxylation forms heme I, the second hydroxylation results in an unstable dihydroxymethyl group, which spontaneously dehydrates, resulting in the formyl group of heme A. This is Heme A synthase from Ehrlichia ruminantium (strain Welgevonden).